Here is a 603-residue protein sequence, read N- to C-terminus: NADH-quinone oxidoreductase subunit C/D (603 aa).

Positions 1 to 193 (MVNNMTDLTA…DPFTLTKQKE (193 aa)) are NADH dehydrogenase I subunit C. The tract at residues 217–603 (DFMFLNLGPN…IDFVMSDVDR (387 aa)) is NADH dehydrogenase I subunit D.

The protein in the N-terminal section; belongs to the complex I 30 kDa subunit family. This sequence in the C-terminal section; belongs to the complex I 49 kDa subunit family. As to quaternary structure, NDH-1 is composed of 13 different subunits. Subunits NuoB, CD, E, F, and G constitute the peripheral sector of the complex.

Its subcellular location is the cell inner membrane. It carries out the reaction a quinone + NADH + 5 H(+)(in) = a quinol + NAD(+) + 4 H(+)(out). In terms of biological role, NDH-1 shuttles electrons from NADH, via FMN and iron-sulfur (Fe-S) centers, to quinones in the respiratory chain. The immediate electron acceptor for the enzyme in this species is believed to be ubiquinone. Couples the redox reaction to proton translocation (for every two electrons transferred, four hydrogen ions are translocated across the cytoplasmic membrane), and thus conserves the redox energy in a proton gradient. This chain is NADH-quinone oxidoreductase subunit C/D, found in Cronobacter sakazakii (strain ATCC BAA-894) (Enterobacter sakazakii).